Reading from the N-terminus, the 504-residue chain is MEELRGYLELDRSWQRDFLYTLILQEYIYSLAHDHGFNRTIFFENAGYEKKYSFLIVKRLITRMYQQNHLILSANDSNQNEFLGQKKNLYSQMISEGFAFIVEIPFSLQLLFSLEGKEIVKSRNLRSIHSIFPFLEDKFSHLNYVLDILIPHPVHLEILVQTIRYWTKDASSLHLLRFCLYEYRNWNSRISRKQYISFFSNRNQRLFLFLYNSHVCEYESIFIFLRNQPSHLRSTFSGAFLERIYFYEKIEHLVKVFTKNFQVILWFFKDTFMHYVRYQGKSFLASKGTSLLMIKWKYYLVNFWQCSFSVWSQPRRIYINXLXNHXLDFMXFLSSVRLNPSVVRIQMLEKSFIIDNAINTFDTRVPNIPMIGSFAKAKFCNIFGHPISKPVWAYLSDSDIIDRFGRICRSLSHYYSGSSRKKSLYRIKYILRLSCARTLARKHKSTVRTFLKRLGSEFLEEFFMEEEKVLSLILPRDSYTSQRLYRGRIWYLDIFCIHDLANHE.

Belongs to the intron maturase 2 family. MatK subfamily.

It is found in the plastid. It localises to the chloroplast. Its function is as follows. Usually encoded in the trnK tRNA gene intron. Probably assists in splicing its own and other chloroplast group II introns. The chain is Maturase K from Nepenthes distillatoria (Pitcher plant).